A 519-amino-acid polypeptide reads, in one-letter code: Maturase K (519 aa).

It belongs to the intron maturase 2 family. MatK subfamily.

The protein localises to the plastid. The protein resides in the chloroplast. Usually encoded in the trnK tRNA gene intron. Probably assists in splicing its own and other chloroplast group II introns. This chain is Maturase K, found in Cycas panzhihuaensis (Dukou cycad).